A 103-amino-acid chain; its full sequence is Small ribosomal subunit protein uS10 (103 aa).

Belongs to the universal ribosomal protein uS10 family. As to quaternary structure, part of the 30S ribosomal subunit.

In terms of biological role, involved in the binding of tRNA to the ribosomes. This Borrelia duttonii (strain Ly) protein is Small ribosomal subunit protein uS10.